The chain runs to 115 residues: Promotilin (115 aa).

An N-terminal signal peptide occupies residues 1–25 (MLSRKATAVLLAVHAAAMLASQTEA). A disordered region spans residues 43 to 72 (RYKGQKKSLSVQQRSEEVGPVDPTEPWEEK).

The protein belongs to the motilin family.

Its subcellular location is the secreted. Plays an important role in the regulation of interdigestive gastrointestinal motility and indirectly causes rhythmic contraction of duodenal and colonic smooth muscle. The protein is Promotilin (MLN) of Bos taurus (Bovine).